The sequence spans 342 residues: Heat-inducible transcription repressor HrcA (342 aa).

It belongs to the HrcA family.

Its function is as follows. Negative regulator of class I heat shock genes (grpE-dnaK-dnaJ and groELS operons). Prevents heat-shock induction of these operons. The sequence is that of Heat-inducible transcription repressor HrcA from Acholeplasma laidlawii.